A 414-amino-acid polypeptide reads, in one-letter code: MSKKIHGGSVVEMQGDEMTRIIWELIKEKLILPYVELDLHSYDLGIENRDATNDQVTKDAAEAIKKYNVGVKCATITPDEKRVEEFKLKQMWKSPNGTIRNILGGTVFREAIICKNIPRLVTGWVKPIIIGRHAYGDQYRATDFVVPGPGKVEITYTPKDGSQKVTYLVHSFEEGGGVAMGMYNQDKSIEDFAHSSFQMALSKGWPLYLSTKNTILKKYDGRFKDIFQEIYDKQYKSQFEAQKIWYEHRLIDDMVAQAMKSEGGFIWACKNYDGDVQSDSVAQGYGSLGMMTSVLICPDGKTVEAEAAHGTVTRHYRMHQKGQETSTNPIASIFAWSRGLAHRARLDNNTELSFFAKALEEVCIETIEAGFMTKDLAACIKGLPNVQRSDYLNTFEFMDKLGENLKAKLAQAKL.

N-acetylserine is present on serine 2. Tyrosine 42 carries the phosphotyrosine modification. Residue 75–77 (TIT) coordinates NADP(+). Residue threonine 77 participates in substrate binding. The residue at position 81 (lysine 81) is an N6-acetyllysine. Residue arginine 82 participates in NADP(+) binding. Substrate is bound by residues 94–100 (SPNGTIR) and arginine 109. An N6-succinyllysine modification is found at lysine 126. Substrate contacts are provided by arginine 132 and lysine 212. Residues lysine 224, lysine 233, and lysine 243 each carry the N6-acetyllysine modification. Aspartate 252 is a Mn(2+) binding site. Residue lysine 260 participates in NADP(+) binding. Residues aspartate 275 and aspartate 279 each contribute to the Mn(2+) site. 310-315 (GTVTRH) contributes to the NADP(+) binding site. Lysine 321 is subject to N6-acetyllysine. Asparagine 328 lines the NADP(+) pocket. Serine 389 is modified (phosphoserine). Lysine 400 bears the N6-succinyllysine mark.

This sequence belongs to the isocitrate and isopropylmalate dehydrogenases family. Homodimer. Mg(2+) is required as a cofactor. The cofactor is Mn(2+). Post-translationally, acetylation at Lys-374 dramatically reduces catalytic activity.

The protein localises to the cytoplasm. The protein resides in the cytosol. The catalysed reaction is D-threo-isocitrate + NADP(+) = 2-oxoglutarate + CO2 + NADPH. Functionally, catalyzes the NADP(+)-dependent oxidative decarboxylation of isocitrate (D-threo-isocitrate) to 2-ketoglutarate (2-oxoglutarate), which is required by other enzymes such as the phytanoyl-CoA dioxygenase. Plays a critical role in the generation of NADPH, an important cofactor in many biosynthesis pathways. May act as a corneal epithelial crystallin and may be involved in maintaining corneal epithelial transparency. This chain is Isocitrate dehydrogenase [NADP] cytoplasmic (IDH1), found in Microtus ochrogaster (Prairie vole).